A 333-amino-acid polypeptide reads, in one-letter code: Protoheme IX farnesyltransferase (333 aa).

Transmembrane regions (helical) follow at residues 64 to 84, 110 to 130, 133 to 153, 161 to 181, 189 to 209, 246 to 266, and 287 to 307; these read LICT…LNCL, TVFL…VSGV, LAAG…TVIL, IVFG…AATG, WLFG…AILL, IMGV…LLPF, and AKSL…LLLI.

Belongs to the UbiA prenyltransferase family. Protoheme IX farnesyltransferase subfamily.

Its subcellular location is the cell inner membrane. The enzyme catalyses heme b + (2E,6E)-farnesyl diphosphate + H2O = Fe(II)-heme o + diphosphate. The protein operates within porphyrin-containing compound metabolism; heme O biosynthesis; heme O from protoheme: step 1/1. Converts heme B (protoheme IX) to heme O by substitution of the vinyl group on carbon 2 of heme B porphyrin ring with a hydroxyethyl farnesyl side group. The polypeptide is Protoheme IX farnesyltransferase (Prochlorococcus marinus (strain MIT 9215)).